The sequence spans 415 residues: Transcription factor gsfR2 (415 aa).

A DNA-binding region (zn(2)-C6 fungal-type) is located at residues 9-36; it reads CITCVQSKRKCDQGLPKCQRCLAKNIHC. The disordered stretch occupies residues 65 to 91; that stretch reads AEEPSRGCQLQRSPARPTSPTHSPHAN. Over residues 72–88 the composition is skewed to polar residues; that stretch reads CQLQRSPARPTSPTHSP.

It localises to the nucleus. In terms of biological role, transcription factor that regulates expression of the gene cluster that mediates the biosynthesis of Griseofulvin, an important antifungal drug that has been in use for a long time for treating dermatophyte infections. The protein is Transcription factor gsfR2 of Penicillium aethiopicum.